An 89-amino-acid polypeptide reads, in one-letter code: Large ribosomal subunit protein bL31B (89 aa).

Belongs to the bacterial ribosomal protein bL31 family. Type B subfamily. In terms of assembly, part of the 50S ribosomal subunit.

The chain is Large ribosomal subunit protein bL31B from Actinobacillus pleuropneumoniae serotype 5b (strain L20).